The sequence spans 556 residues: Formate--tetrahydrofolate ligase (556 aa).

Residue 65–72 (TPAGEGKT) coordinates ATP.

Belongs to the formate--tetrahydrofolate ligase family.

The catalysed reaction is (6S)-5,6,7,8-tetrahydrofolate + formate + ATP = (6R)-10-formyltetrahydrofolate + ADP + phosphate. Its pathway is one-carbon metabolism; tetrahydrofolate interconversion. The sequence is that of Formate--tetrahydrofolate ligase from Lachnoclostridium phytofermentans (strain ATCC 700394 / DSM 18823 / ISDg) (Clostridium phytofermentans).